Here is a 34-residue protein sequence, read N- to C-terminus: Protein MgtT (34 aa).

A disordered region spans residues 1–34 (MNGDNPSPNRPLVTVVYKGPDFYDGEKKPPVNRR). Residues 24-34 (DGEKKPPVNRR) show a composition bias toward basic and acidic residues.

This chain is Protein MgtT, found in Escherichia coli (strain K12).